The following is a 220-amino-acid chain: Endonuclease NucS (220 aa).

It belongs to the NucS endonuclease family.

The protein localises to the cytoplasm. In terms of biological role, cleaves both 3' and 5' ssDNA extremities of branched DNA structures. The polypeptide is Endonuclease NucS (Parafrankia sp. (strain EAN1pec)).